Consider the following 110-residue polypeptide: Integration host factor subunit alpha (110 aa).

The protein belongs to the bacterial histone-like protein family. In terms of assembly, heterodimer of an alpha and a beta chain.

In terms of biological role, this protein is one of the two subunits of integration host factor, a specific DNA-binding protein that functions in genetic recombination as well as in transcriptional and translational control. This Nitrobacter hamburgensis (strain DSM 10229 / NCIMB 13809 / X14) protein is Integration host factor subunit alpha.